The chain runs to 308 residues: Limonin dehydrogenase (308 aa).

This sequence belongs to the aldehyde dehydrogenase family.

It localises to the periplasm. Completely inhibited by HgCl(2), CoCl(2) and CaCl(2). Catalyzes the NAD(+)-dependent conversion of limonin. This chain is Limonin dehydrogenase, found in Pseudomonas putida (Arthrobacter siderocapsulatus).